We begin with the raw amino-acid sequence, 208 residues long: FMN-dependent NADH:quinone oxidoreductase (208 aa).

Residues Ser9, 15–17 (SVS), 96–99 (MYNF), and 140–143 (TRGG) contribute to the FMN site.

The protein belongs to the azoreductase type 1 family. Homodimer. It depends on FMN as a cofactor.

The catalysed reaction is 2 a quinone + NADH + H(+) = 2 a 1,4-benzosemiquinone + NAD(+). The enzyme catalyses N,N-dimethyl-1,4-phenylenediamine + anthranilate + 2 NAD(+) = 2-(4-dimethylaminophenyl)diazenylbenzoate + 2 NADH + 2 H(+). Functionally, quinone reductase that provides resistance to thiol-specific stress caused by electrophilic quinones. Also exhibits azoreductase activity. Catalyzes the reductive cleavage of the azo bond in aromatic azo compounds to the corresponding amines. The protein is FMN-dependent NADH:quinone oxidoreductase of Azospirillum brasilense.